The primary structure comprises 342 residues: Isopentenyl-diphosphate delta-isomerase (342 aa).

12 to 13 (RK) contacts substrate. Residues 71-73 (AMT), Ser-101, and Asn-129 each bind FMN. 101–103 (SQR) provides a ligand contact to substrate. A substrate-binding site is contributed by Gln-163. Glu-164 provides a ligand contact to Mg(2+). Residues Lys-195, Thr-225, 272–274 (GIR), and 293–294 (AR) contribute to the FMN site.

It belongs to the IPP isomerase type 2 family. As to quaternary structure, homooctamer. Dimer of tetramers. It depends on FMN as a cofactor. NADPH is required as a cofactor. Mg(2+) serves as cofactor.

Its subcellular location is the cytoplasm. The catalysed reaction is isopentenyl diphosphate = dimethylallyl diphosphate. Functionally, involved in the biosynthesis of isoprenoids. Catalyzes the 1,3-allylic rearrangement of the homoallylic substrate isopentenyl (IPP) to its allylic isomer, dimethylallyl diphosphate (DMAPP). This Mycolicibacterium gilvum (strain PYR-GCK) (Mycobacterium gilvum (strain PYR-GCK)) protein is Isopentenyl-diphosphate delta-isomerase.